The following is a 61-amino-acid chain: Small ribosomal subunit protein uS14 (61 aa).

4 residues coordinate Zn(2+): Cys-24, Cys-27, Cys-40, and Cys-43.

It belongs to the universal ribosomal protein uS14 family. Zinc-binding uS14 subfamily. In terms of assembly, part of the 30S ribosomal subunit. Contacts proteins S3 and S10. Zn(2+) is required as a cofactor.

Its function is as follows. Binds 16S rRNA, required for the assembly of 30S particles and may also be responsible for determining the conformation of the 16S rRNA at the A site. This is Small ribosomal subunit protein uS14 from Mesomycoplasma hyopneumoniae (strain 232) (Mycoplasma hyopneumoniae).